The chain runs to 208 residues: Casparian strip membrane protein 2 (208 aa).

Positions 1–23 (MDSKSGRSESAINIPESNSTKHK) are disordered. Over 1–46 (MDSKSGRSESAINIPESNSTKHKSTVVHTATKVAAVAPRGGGWRRG) the chain is Cytoplasmic. A compositionally biased stretch (polar residues) spans 8 to 18 (SESAINIPESN). Residues 47 to 67 (VSIFDFILRICALAAALAATA) traverse the membrane as a helical segment. The Extracellular segment spans residues 68–96 (TMGTTDQTLPFFTQFFQFQASYDDLPAFT). Residues 97 to 117 (FFVVANGIASGYLVLSLPFSI) traverse the membrane as a helical segment. Residues 118-129 (ATIVRPHAAAIK) are Cytoplasmic-facing. The chain crosses the membrane as a helical span at residues 130-150 (LLLIIFDTVMVAFTAAAAAAA). Residues 151-184 (AAIVYLAHNGNSKTNWFAICQQFNDFCQRVSGAV) are Extracellular-facing. A helical transmembrane segment spans residues 185 to 205 (VASFVAAVILIFLVVLSAVAI). At 206-208 (RKH) the chain is on the cytoplasmic side.

It belongs to the Casparian strip membrane proteins (CASP) family. As to quaternary structure, homodimer and heterodimers.

It localises to the cell membrane. Regulates membrane-cell wall junctions and localized cell wall deposition. Required for establishment of the Casparian strip membrane domain (CSD) and the subsequent formation of Casparian strips, a cell wall modification of the root endodermis that determines an apoplastic barrier between the intraorganismal apoplasm and the extraorganismal apoplasm and prevents lateral diffusion. The polypeptide is Casparian strip membrane protein 2 (Triphysaria pusilla (Dwarf owl's-clover)).